A 686-amino-acid polypeptide reads, in one-letter code: Rhophilin-2 (686 aa).

Residues 26–100 (NPLAQTGRSK…LEGLNISVGV (75 aa)) enclose the REM-1 domain. The interval 46-66 (QILKAVRMRTGAENLLKVATN) is interaction with Rho. Residues 111–460 (PLIPLGLKET…RLKYAQHQDD (350 aa)) form the BRO1 domain. A PDZ domain is found at 515–593 (RSIHFTAEEG…DGVEMKVVSL (79 aa)). Phosphothreonine is present on T655.

This sequence belongs to the RHPN family. Interacts with GTP-bound RhoA and RhoB. Interacts with both GTP- and GDP-bound RhoA. Interacts with KRT18. As to expression, mainly expressed in thyroid.

Its subcellular location is the cytoplasm. It is found in the perinuclear region. Functionally, binds specifically to GTP-Rho. May function in a Rho pathway to limit stress fiber formation and/or increase the turnover of F-actin structures in the absence of high levels of RhoA activity. This is Rhophilin-2 (RHPN2) from Canis lupus familiaris (Dog).